Reading from the N-terminus, the 274-residue chain is Elongation factor Ts (274 aa).

Residues 82-85 are involved in Mg(2+) ion dislocation from EF-Tu; that stretch reads TDFV.

The protein belongs to the EF-Ts family.

Its subcellular location is the cytoplasm. Associates with the EF-Tu.GDP complex and induces the exchange of GDP to GTP. It remains bound to the aminoacyl-tRNA.EF-Tu.GTP complex up to the GTP hydrolysis stage on the ribosome. The sequence is that of Elongation factor Ts from Flavobacterium psychrophilum (strain ATCC 49511 / DSM 21280 / CIP 103535 / JIP02/86).